Here is a 391-residue protein sequence, read N- to C-terminus: Serine acetyltransferase 3, mitochondrial (391 aa).

Disordered stretches follow at residues 40 to 82 (KHHT…HDDE) and 353 to 375 (VGNPARLLGGKDNPKTHDKIPGL). Pro residues predominate over residues 45 to 56 (SPPPSPPPPPPM).

It belongs to the transferase hexapeptide repeat family. As to quaternary structure, homomultimer. Interacts with OASC. Component of the cysteine synthase complex (CSC) composed of two OAS-TL dimers and one SAT hexamer. In terms of tissue distribution, ubiquitous with higher levels in leaves and siliques. Localized in vascular tissues, particularly in phloem.

It localises to the mitochondrion. It catalyses the reaction L-serine + acetyl-CoA = O-acetyl-L-serine + CoA. The protein operates within amino-acid biosynthesis; L-cysteine biosynthesis; L-cysteine from L-serine: step 1/2. The sequence is that of Serine acetyltransferase 3, mitochondrial (SAT3) from Arabidopsis thaliana (Mouse-ear cress).